A 235-amino-acid chain; its full sequence is MKVQLIASTILEDPSWAGTDYVGDDETVTSADELAEFAGRNCYLSFDRPNPKTRENVDYLNHILDVGHESVLEHSSATFYIEASRSVLTELERHRHLSFSVVSQRYVDPTELGIHVPPAFTELSGSDADKAKEVLLDVQSFAQEAYEYLVHIFSDAGFPRKKAREAARAVLPNMTNSPMVVTGNHRAWRYVIKNRWHEAADAEIRELAGELLRQLREIAPNTYQDIPTEPYSYGG.

Positions 1–229 (MKVQLIASTI…PNTYQDIPTE (229 aa)) constitute a ThyX domain. Residues S70 and 93–95 (RHR) each bind FAD. DUMP-binding positions include 90-93 (ELER), 103-105 (SQR), and R168. Residues 93 to 103 (RHRHLSFSVVS) carry the ThyX motif motif. 184–186 (NHR) is an FAD binding site. A dUMP-binding site is contributed by R195. R195 (involved in ionization of N3 of dUMP, leading to its activation) is an active-site residue.

This sequence belongs to the thymidylate synthase ThyX family. In terms of assembly, homotetramer. FAD is required as a cofactor.

The catalysed reaction is dUMP + (6R)-5,10-methylene-5,6,7,8-tetrahydrofolate + NADPH + H(+) = dTMP + (6S)-5,6,7,8-tetrahydrofolate + NADP(+). It participates in pyrimidine metabolism; dTTP biosynthesis. Functionally, catalyzes the reductive methylation of 2'-deoxyuridine-5'-monophosphate (dUMP) to 2'-deoxythymidine-5'-monophosphate (dTMP) while utilizing 5,10-methylenetetrahydrofolate (mTHF) as the methyl donor, and NADPH and FADH(2) as the reductant. The protein is Probable flavin-dependent thymidylate synthase (48) of Mycobacterium (Mycobacteriophage D29).